A 182-amino-acid chain; its full sequence is Putative minor fimbrial subunit PmfF (182 aa).

The first 22 residues, 1–22 (MKNSIIKSAITCLLLLSPSTFA), serve as a signal peptide directing secretion.

This sequence belongs to the fimbrial protein family.

The protein localises to the fimbrium. This is Putative minor fimbrial subunit PmfF (pmfF) from Proteus mirabilis (strain HI4320).